Consider the following 91-residue polypeptide: MNVKAIAKQMPITPRKTRLVADLIRGKNIKEAQAILMFTPKSASPIVLKLLKSAIANATNNFSLDDKNLYVKEIFVNEGLRLTRLFPRAKG.

The protein belongs to the universal ribosomal protein uL22 family. Part of the 50S ribosomal subunit.

Functionally, this protein binds specifically to 23S rRNA; its binding is stimulated by other ribosomal proteins, e.g. L4, L17, and L20. It is important during the early stages of 50S assembly. It makes multiple contacts with different domains of the 23S rRNA in the assembled 50S subunit and ribosome. The globular domain of the protein is located near the polypeptide exit tunnel on the outside of the subunit, while an extended beta-hairpin is found that lines the wall of the exit tunnel in the center of the 70S ribosome. This is Large ribosomal subunit protein uL22 (rplV) from Pigeon pea witches'-broom phytoplasma.